A 296-amino-acid polypeptide reads, in one-letter code: Formamidopyrimidine-DNA glycosylase (296 aa).

Catalysis depends on Pro-2, which acts as the Schiff-base intermediate with DNA. Glu-3 serves as the catalytic Proton donor. The active-site Proton donor; for beta-elimination activity is Lys-58. His-104, Arg-126, and Lys-169 together coordinate DNA. An FPG-type zinc finger spans residues 260 to 296; that stretch reads SVYDREGQACGTPGCGGTVARIVQAGRSTFYCAACQK. The active-site Proton donor; for delta-elimination activity is Arg-286.

This sequence belongs to the FPG family. In terms of assembly, monomer. Zn(2+) is required as a cofactor.

It carries out the reaction Hydrolysis of DNA containing ring-opened 7-methylguanine residues, releasing 2,6-diamino-4-hydroxy-5-(N-methyl)formamidopyrimidine.. It catalyses the reaction 2'-deoxyribonucleotide-(2'-deoxyribose 5'-phosphate)-2'-deoxyribonucleotide-DNA = a 3'-end 2'-deoxyribonucleotide-(2,3-dehydro-2,3-deoxyribose 5'-phosphate)-DNA + a 5'-end 5'-phospho-2'-deoxyribonucleoside-DNA + H(+). Its function is as follows. Involved in base excision repair of DNA damaged by oxidation or by mutagenic agents. Acts as a DNA glycosylase that recognizes and removes damaged bases. Has a preference for oxidized purines, such as 7,8-dihydro-8-oxoguanine (8-oxoG). Has AP (apurinic/apyrimidinic) lyase activity and introduces nicks in the DNA strand. Cleaves the DNA backbone by beta-delta elimination to generate a single-strand break at the site of the removed base with both 3'- and 5'-phosphates. This is Formamidopyrimidine-DNA glycosylase from Rhizobium etli (strain CIAT 652).